The chain runs to 811 residues: tRNA(Met) cytidine acetyltransferase TmcA (811 aa).

ATP contacts are provided by Gln267 and Arg440. One can recognise an N-acetyltransferase domain in the interval 474-663 (RKEVYLEEPD…GEFTAIVLKP (190 aa)). Residues 590-592 (IAT), Glu630, and Arg637 contribute to the acetyl-CoA site.

This sequence belongs to the TmcA family.

The protein resides in the cytoplasm. The enzyme catalyses cytidine(34) in elongator tRNA(Met) + acetyl-CoA + ATP + H2O = N(4)-acetylcytidine(34) in elongator tRNA(Met) + ADP + phosphate + CoA + H(+). It catalyses the reaction a cytidine in RNA + acetyl-CoA + ATP + H2O = an N(4)-acetylcytidine in RNA + ADP + phosphate + CoA + H(+). It carries out the reaction a cytidine in tRNA + acetyl-CoA + ATP + H2O = an N(4)-acetylcytidine in tRNA + ADP + phosphate + CoA + H(+). The catalysed reaction is a cytidine in mRNA + acetyl-CoA + ATP + H2O = an N(4)-acetylcytidine in mRNA + ADP + phosphate + CoA + H(+). In terms of biological role, catalyzes the formation of N(4)-acetylcytidine (ac(4)C) at the wobble position of tRNA(Met), by using acetyl-CoA as an acetyl donor and ATP (or GTP). Catalyzes the formation of 404 N(4)-acetylcytidine (ac(4)C) sites in RNA, almost always on the middle C of a CCG motif. There 173 ac(4)C sites in rRNA, 35 in non-coding (nc)RNA, 119 in mRNA and 77 in tRNA. More acetylation is observed at 85 and 95 than at 65 or 75 degrees Celsius. This Thermococcus kodakarensis (strain ATCC BAA-918 / JCM 12380 / KOD1) (Pyrococcus kodakaraensis (strain KOD1)) protein is tRNA(Met) cytidine acetyltransferase TmcA.